Reading from the N-terminus, the 134-residue chain is Early E3B 14.9 kDa protein (134 aa).

The N-terminal stretch at 1 to 19 is a signal peptide; that stretch reads MQAMLPVILILLLPCIALA. A helical membrane pass occupies residues 54-78; sequence YWIVIVGIINILSCTFFSITIYPTF.

It belongs to the adenoviridae E3_14 family. Phosphorylated on serine; O-glycosylated, but not N-glycosylated.

It localises to the host membrane. Down-regulates the EGF receptor and prevents cytolysis by TNF. In Homo sapiens (Human), this protein is Early E3B 14.9 kDa protein.